We begin with the raw amino-acid sequence, 222 residues long: 2-C-methyl-D-erythritol 4-phosphate cytidylyltransferase (222 aa).

The protein belongs to the IspD/TarI cytidylyltransferase family. IspD subfamily.

It carries out the reaction 2-C-methyl-D-erythritol 4-phosphate + CTP + H(+) = 4-CDP-2-C-methyl-D-erythritol + diphosphate. It functions in the pathway isoprenoid biosynthesis; isopentenyl diphosphate biosynthesis via DXP pathway; isopentenyl diphosphate from 1-deoxy-D-xylulose 5-phosphate: step 2/6. Its function is as follows. Catalyzes the formation of 4-diphosphocytidyl-2-C-methyl-D-erythritol from CTP and 2-C-methyl-D-erythritol 4-phosphate (MEP). This Thermotoga maritima (strain ATCC 43589 / DSM 3109 / JCM 10099 / NBRC 100826 / MSB8) protein is 2-C-methyl-D-erythritol 4-phosphate cytidylyltransferase.